Reading from the N-terminus, the 536-residue chain is Ribulokinase (536 aa).

Belongs to the ribulokinase family.

The catalysed reaction is D-ribulose + ATP = D-ribulose 5-phosphate + ADP + H(+). The enzyme catalyses L-ribulose + ATP = L-ribulose 5-phosphate + ADP + H(+). It functions in the pathway carbohydrate degradation; L-arabinose degradation via L-ribulose; D-xylulose 5-phosphate from L-arabinose (bacterial route): step 2/3. The protein is Ribulokinase of Staphylococcus epidermidis (strain ATCC 35984 / DSM 28319 / BCRC 17069 / CCUG 31568 / BM 3577 / RP62A).